The sequence spans 209 residues: Kynurenine formamidase (209 aa).

Position 18 (Phe18) interacts with substrate. Zn(2+)-binding residues include His48, His52, and Asp54. Catalysis depends on His58, which acts as the Proton donor/acceptor. The Zn(2+) site is built by His160 and Glu172.

Belongs to the Cyclase 1 superfamily. KynB family. Homodimer. Zn(2+) serves as cofactor.

The enzyme catalyses N-formyl-L-kynurenine + H2O = L-kynurenine + formate + H(+). It participates in amino-acid degradation; L-tryptophan degradation via kynurenine pathway; L-kynurenine from L-tryptophan: step 2/2. Functionally, catalyzes the hydrolysis of N-formyl-L-kynurenine to L-kynurenine, the second step in the kynurenine pathway of tryptophan degradation. This Bordetella bronchiseptica (strain ATCC BAA-588 / NCTC 13252 / RB50) (Alcaligenes bronchisepticus) protein is Kynurenine formamidase.